We begin with the raw amino-acid sequence, 397 residues long: Cercosporin biosynthesis regulatory protein CTB8 (397 aa).

The zn(2)-C6 fungal-type DNA-binding region spans cysteine 26–cysteine 53. Disordered stretches follow at residues glycine 62 to lysine 92 and alanine 173 to histidine 198. Over residues proline 74–proline 87 the composition is skewed to polar residues. The segment covering proline 179–threonine 197 has biased composition (low complexity).

Its subcellular location is the nucleus. Transcription regulator of the gene cluster that mediates the biosynthesis of cercosporin, a light-activated, non-host-selective toxin. The perylenequinone chromophore of cercosporin absorbs light energy to attain an electronically-activated triplet state and produces active oxygen species such as the hydroxyl radical, superoxide, hydrogen peroxide or singlet oxygen upon reaction with oxygen molecules. These reactive oxygen species cause damage to various cellular components including lipids, proteins and nucleic acids. This chain is Cercosporin biosynthesis regulatory protein CTB8, found in Cercospora nicotianae (Barn spot disease fungus).